We begin with the raw amino-acid sequence, 355 residues long: Guanine nucleotide-binding protein G(i) subunit alpha (355 aa).

Gly-2 is lipidated: N-myristoyl glycine. Cys-3 carries S-palmitoyl cysteine lipidation. One can recognise a G-alpha domain in the interval 33–355 (REVKLLLLGA…KNNLKDCGLF (323 aa)). The G1 motif stretch occupies residues 36 to 49 (KLLLLGAGESGKST). GTP is bound by residues 41–48 (GAGESGKS), 176–182 (LRTRVKT), 201–205 (DVGGQ), 270–273 (NKKD), and Ala-327. Ser-48 and Thr-182 together coordinate Mg(2+). The tract at residues 174-182 (DVLRTRVKT) is G2 motif. The tract at residues 197–206 (FKLFDVGGQR) is G3 motif. The tract at residues 266–273 (ILFLNKKD) is G4 motif. Positions 325-330 (TCATDT) are G5 motif.

The protein belongs to the G-alpha family. G(i/o/t/z) subfamily. In terms of assembly, g proteins are composed of 3 units; alpha, beta and gamma. The alpha chain contains the guanine nucleotide binding site.

In terms of biological role, guanine nucleotide-binding proteins (G proteins) are involved as modulators or transducers in various transmembrane signaling systems. This Homarus americanus (American lobster) protein is Guanine nucleotide-binding protein G(i) subunit alpha.